We begin with the raw amino-acid sequence, 91 residues long: Bacterial microcompartment shell protein PduJ (91 aa).

A BMC domain is found at 4-88 (ALGLVETKGL…PHSDVEAILP (85 aa)).

The protein belongs to the bacterial microcompartments protein family. As to quaternary structure, homohexamer with a central pore. Interacts with PduP, which targets PduP to the BMC. Interacts with shell protein PduA.

Its subcellular location is the bacterial microcompartment. The protein operates within polyol metabolism; 1,2-propanediol degradation. Its function is as follows. One of the major shell proteins of the bacterial microcompartment (BMC) dedicated to 1,2-propanediol (1,2-PD) degradation. At least one of PduA or PduJ is required for BMC assembly; it must be encoded as the first gene in the pdu operon. Required for structural integrity of BMCs and to mitigate propionaldehyde toxicity, probably joins facets responsible for BMC closure. Probably the hub for binding multiple enzymes to the interior of the BMC. In terms of biological role, expression of a cosmid containing the full 21-gene pdu operon in E.coli allows E.coli to grow on 1,2-PD with the appearance of BMCs in its cytoplasm. Overexpression of this protein leads to an internal structure with a whorled architecture. The 1,2-PD-specific bacterial microcompartment (BMC) concentrates low levels of 1,2-PD catabolic enzymes, concentrates volatile reaction intermediates thus enhancing pathway flux and keeps the level of toxic, mutagenic propionaldehyde low. This Citrobacter freundii protein is Bacterial microcompartment shell protein PduJ.